The primary structure comprises 451 residues: Ribulose bisphosphate carboxylase large chain (451 aa).

Lys-5 carries the N6,N6,N6-trimethyllysine modification. Substrate contacts are provided by Asn-114 and Thr-164. The active-site Proton acceptor is Lys-166. Lys-168 contacts substrate. Residues Lys-192, Asp-194, and Glu-195 each coordinate Mg(2+). Lys-192 bears the N6-carboxylysine mark. The Proton acceptor role is filled by His-285. Residues Arg-286, His-318, and Ser-370 each contribute to the substrate site.

Belongs to the RuBisCO large chain family. Type I subfamily. As to quaternary structure, heterohexadecamer of 8 large chains and 8 small chains; disulfide-linked. The disulfide link is formed within the large subunit homodimers. Mg(2+) serves as cofactor. The disulfide bond which can form in the large chain dimeric partners within the hexadecamer appears to be associated with oxidative stress and protein turnover.

It is found in the plastid. Its subcellular location is the chloroplast. It carries out the reaction 2 (2R)-3-phosphoglycerate + 2 H(+) = D-ribulose 1,5-bisphosphate + CO2 + H2O. The enzyme catalyses D-ribulose 1,5-bisphosphate + O2 = 2-phosphoglycolate + (2R)-3-phosphoglycerate + 2 H(+). In terms of biological role, ruBisCO catalyzes two reactions: the carboxylation of D-ribulose 1,5-bisphosphate, the primary event in carbon dioxide fixation, as well as the oxidative fragmentation of the pentose substrate in the photorespiration process. Both reactions occur simultaneously and in competition at the same active site. The polypeptide is Ribulose bisphosphate carboxylase large chain (Aristea glauca).